The chain runs to 305 residues: Tetraspanin-12 (305 aa).

The Cytoplasmic segment spans residues 1–12 (MAREDSVRCLRC). S-palmitoyl cysteine attachment occurs at residues Cys-9 and Cys-12. A helical transmembrane segment spans residues 13–33 (LLYALNLLFWLMSISVLGVSA). Topologically, residues 34–59 (WIRDYLNNVLTLTAETRVEEAVILTY) are extracellular. A helical transmembrane segment spans residues 60–80 (FPVVHPVMIAVCCFLILVGML). At 81–89 (GYCGTVKRN) the chain is on the cytoplasmic side. Cys-83 is lipidated: S-palmitoyl cysteine. Residues 90 to 110 (LLLLVWYFGSLLVIFCVELAC) form a helical membrane-spanning segment. Topologically, residues 111-224 (GVWTYEQEIT…RGTKQLQVLR (114 aa)) are extracellular. A helical membrane pass occupies residues 225 to 245 (FLGISIGVTQILAMILTITLL). Residues 246–305 (WALYYDRRDPGADQIMSLKNDTSQQLSCHSVELLKPSLTGIFEHTSMANSFNTHFEMEEL) are Cytoplasmic-facing.

This sequence belongs to the tetraspanin (TM4SF) family. Component of a complex, at least composed of TSPAN12, FZD4 and norrin (NDP). In terms of processing, palmitoylated; required for interaction with ADAM10. The precise position of palmitoylated residues is unclear and occurs either on Cys-9, Cys-12 and/or Cys-83.

It is found in the cell membrane. Functionally, regulator of cell surface receptor signal transduction. Plays a central role in retinal vascularization by regulating norrin (NDP) signal transduction. Acts in concert with norrin (NDP) to promote FZD4 multimerization and subsequent activation of FZD4, leading to promote accumulation of beta-catenin (CTNNB1) and stimulate LEF/TCF-mediated transcriptional programs. Suprisingly, it only activates the norrin (NDP)-dependent activation of FZD4, while it does not activate the Wnt-dependent activation of FZD4, suggesting the existence of a Wnt-independent signaling that also promote accumulation the beta-catenin (CTNNB1). In Gallus gallus (Chicken), this protein is Tetraspanin-12 (TSPAN12).